A 119-amino-acid chain; its full sequence is Chorion class CA protein ERA.5 (119 aa).

The signal sequence occupies residues 1 to 21 (MSTYTFVLFCLQICLIQNVYS). A left arm region spans residues 22 to 55 (QCLGRVGPGGPPVGPYGGPLGGPGYGPVGYGGCG). Residues 56 to 103 (GYGGSGIGNVAVAGELPVAGSSAVMGQVPVIGAVEFAGPACAVGSVSI) form a central domain region. Positions 104 to 119 (SGACGPTCGCGGSPYY) are right arm.

This sequence belongs to the chorion protein family.

This protein is one of many from the eggshell of the silk moth. The protein is Chorion class CA protein ERA.5 (ERA.5) of Bombyx mori (Silk moth).